Consider the following 104-residue polypeptide: Small ribosomal subunit protein uS10 (104 aa).

The protein belongs to the universal ribosomal protein uS10 family. Part of the 30S ribosomal subunit.

In terms of biological role, involved in the binding of tRNA to the ribosomes. The protein is Small ribosomal subunit protein uS10 of Maricaulis maris (strain MCS10) (Caulobacter maris).